Consider the following 627-residue polypeptide: MPRMALLDDIGCPDDVRKLTTKQAEDLAEEIRAFLIDKVSRTGGHLGPNLGVVELTIALHRVFDSPHDPIIFDTGHQSYVHKILTGRANGFEKLRQRGGLSGYPSRAESVHDWVENSHASASLSWAEGMAKGFLSQGEDRTVVAVIGDGALTGGMAWEALNSIADQQGLRLVIVVNDNGRSYTPTVGGLANQLAIIRTDPHYEEALDRMKRHVTDKPLGKQVFGLMHAAKAGVKDALIGNGIFSDLGIKYLGPVDGHDVLSVERALELAKRYGHPVIVHVMTTKGKGFAAAEANEEDHFHAVGRIDPVTGASLKASGGASWTQAFAGAMVELGERRPDIVGVTAAMLHPVGLAPFAARHPDRVLDVGIAEQHAVTSAAGMAAAGLHPVVALYSTFLNRAFDQLLMDAGLHHAGVTIVLDRAGITGTDGASHNGMWDMAMCGIVPGLMLSAPRDRQHLVSVLNEAVDIDDRPTVIRYSKDPIPDDIRIVTSHDGLDVLCDGPEDGILLVAHGQLCAEALAAVDQLDSPVRVVSPRWSLPVCGGLIEEAARARAVVSVEDGLVVSGLGSHLADALSQRGMWRPIRSLGIPQRYLDHDSRSAIMAELGLDSRGIADAVSQLVAQLDGEYS.

Thiamine diphosphate contacts are provided by residues H76 and 117 to 119 (SHA). Mg(2+) is bound at residue D148. Thiamine diphosphate is bound by residues 149–150 (GA), N178, F288, and E370. N178 contributes to the Mg(2+) binding site.

This sequence belongs to the transketolase family. DXPS subfamily. As to quaternary structure, homodimer. Requires Mg(2+) as cofactor. The cofactor is thiamine diphosphate.

It catalyses the reaction D-glyceraldehyde 3-phosphate + pyruvate + H(+) = 1-deoxy-D-xylulose 5-phosphate + CO2. It functions in the pathway metabolic intermediate biosynthesis; 1-deoxy-D-xylulose 5-phosphate biosynthesis; 1-deoxy-D-xylulose 5-phosphate from D-glyceraldehyde 3-phosphate and pyruvate: step 1/1. Its function is as follows. Catalyzes the acyloin condensation reaction between C atoms 2 and 3 of pyruvate and glyceraldehyde 3-phosphate to yield 1-deoxy-D-xylulose-5-phosphate (DXP). The polypeptide is 1-deoxy-D-xylulose-5-phosphate synthase (Cutibacterium acnes (strain DSM 16379 / KPA171202) (Propionibacterium acnes)).